Consider the following 395-residue polypeptide: S-adenosylmethionine synthase (395 aa).

His19 contacts ATP. Residue Asp21 participates in Mg(2+) binding. Position 47 (Glu47) interacts with K(+). L-methionine-binding residues include Glu60 and Gln103. Residues 103-113 (QSPDIAQGVNS) form a flexible loop region. ATP contacts are provided by residues 170-172 (DNK), 236-237 (KF), Asp245, 251-252 (RK), Ala268, and Lys272. Asp245 provides a ligand contact to L-methionine. Lys276 is a binding site for L-methionine.

This sequence belongs to the AdoMet synthase family. In terms of assembly, homotetramer; dimer of dimers. Requires Mg(2+) as cofactor. The cofactor is K(+).

It localises to the cytoplasm. It carries out the reaction L-methionine + ATP + H2O = S-adenosyl-L-methionine + phosphate + diphosphate. It functions in the pathway amino-acid biosynthesis; S-adenosyl-L-methionine biosynthesis; S-adenosyl-L-methionine from L-methionine: step 1/1. Its function is as follows. Catalyzes the formation of S-adenosylmethionine (AdoMet) from methionine and ATP. The overall synthetic reaction is composed of two sequential steps, AdoMet formation and the subsequent tripolyphosphate hydrolysis which occurs prior to release of AdoMet from the enzyme. This Rhodopirellula baltica (strain DSM 10527 / NCIMB 13988 / SH1) protein is S-adenosylmethionine synthase.